The chain runs to 113 residues: Large ribosomal subunit protein uL24 (113 aa).

Belongs to the universal ribosomal protein uL24 family. As to quaternary structure, part of the 50S ribosomal subunit.

One of two assembly initiator proteins, it binds directly to the 5'-end of the 23S rRNA, where it nucleates assembly of the 50S subunit. Functionally, one of the proteins that surrounds the polypeptide exit tunnel on the outside of the subunit. The polypeptide is Large ribosomal subunit protein uL24 (Chlamydia abortus (strain DSM 27085 / S26/3) (Chlamydophila abortus)).